The chain runs to 50 residues: Inducible serine protease inhibitor 1 (50 aa).

Residues 1–27 (DLVXGTNFXKNNPXSTRVAANSXRSPS) form a disordered region. A compositionally biased stretch (polar residues) spans 8–25 (FXKNNPXSTRVAANSXRS).

In terms of biological role, inhibits trypsin and the toxin protease PR2 of M.anisopliae. Does not inhibit chymotrypsin, subtilisin Carlsberg, proteinase K, porcine pancreatic elastase and the toxin protease PR1 of M.anisopliae. The chain is Inducible serine protease inhibitor 1 from Galleria mellonella (Greater wax moth).